Consider the following 425-residue polypeptide: Serine--tRNA ligase (425 aa).

Position 228-230 (228-230 (TAE)) interacts with L-serine. An ATP-binding site is contributed by 259 to 261 (RSE). Glu282 is a binding site for L-serine. 346–349 (EIAS) lines the ATP pocket. Ser382 is an L-serine binding site.

It belongs to the class-II aminoacyl-tRNA synthetase family. Type-1 seryl-tRNA synthetase subfamily. In terms of assembly, homodimer. The tRNA molecule binds across the dimer.

Its subcellular location is the cytoplasm. It catalyses the reaction tRNA(Ser) + L-serine + ATP = L-seryl-tRNA(Ser) + AMP + diphosphate + H(+). It carries out the reaction tRNA(Sec) + L-serine + ATP = L-seryl-tRNA(Sec) + AMP + diphosphate + H(+). Its pathway is aminoacyl-tRNA biosynthesis; selenocysteinyl-tRNA(Sec) biosynthesis; L-seryl-tRNA(Sec) from L-serine and tRNA(Sec): step 1/1. In terms of biological role, catalyzes the attachment of serine to tRNA(Ser). Is also able to aminoacylate tRNA(Sec) with serine, to form the misacylated tRNA L-seryl-tRNA(Sec), which will be further converted into selenocysteinyl-tRNA(Sec). The chain is Serine--tRNA ligase from Rickettsia prowazekii (strain Madrid E).